We begin with the raw amino-acid sequence, 263 residues long: Flagellar brake protein YcgR (263 aa).

A disordered region spans residues 1 to 21 (MAELSTPSPASPAPLDGGRGD). The region spanning 133-250 (QRREFYRLQV…DTRIQRYIFK (118 aa)) is the PilZ domain.

Belongs to the YcgR family. In terms of assembly, monomer. Interacts with the flagellar basal bodies.

Its subcellular location is the bacterial flagellum basal body. Its function is as follows. Acts as a flagellar brake, regulating swimming and swarming in a bis-(3'-5') cyclic diguanylic acid (c-di-GMP)-dependent manner. Binds 1 c-di-GMP dimer per subunit. Increasing levels of c-di-GMP lead to decreased motility. In Thauera aminoaromatica, this protein is Flagellar brake protein YcgR.